We begin with the raw amino-acid sequence, 329 residues long: R-linalool synthase (329 aa).

Position 79 (aspartate 79) interacts with Mg(2+). The DDXXD motif motif lies at 79–83; that stretch reads DDQFD. Arginine 172 contacts substrate. Mg(2+) is bound by residues asparagine 218 and serine 222. An NXXXSXXXD motif motif is present at residues 218-226; the sequence is NELHSFEKD. Residue lysine 225 coordinates substrate. Aspartate 226 contacts Mg(2+). A substrate-binding site is contributed by 308-309; it reads RY.

The protein belongs to the terpene synthase family. In terms of assembly, homodimer. Mg(2+) serves as cofactor.

The enzyme catalyses (2E)-geranyl diphosphate + H2O = (R)-linalool + diphosphate. It catalyses the reaction (2E,6E)-farnesyl diphosphate + H2O = (6E)-nerolidol + diphosphate. In vitro, catalyzes the formation of R-linalool from geranyl diphosphate (GPP). Can also accept farnesyl diphosphate (FPP) as substrate to produce trans-nerolidol. The sequence is that of R-linalool synthase from Streptomyces clavuligerus.